We begin with the raw amino-acid sequence, 30 residues long: Proteinase inhibitor CeKI (30 aa).

The protein belongs to the protease inhibitor I3 (leguminous Kunitz-type inhibitor) family.

In terms of biological role, potent inhibitor of serine proteases plasma kallikrein, plasmin and coagulation factor XIIa. Weak inhibitor of serine proteases trypsin and coagulation factor Xa. Does not inhibit the serine proteases chymotrypsin, elastase or thrombin. Inhibits kinin release from HMW-kininogen by kallikrein in vitro. This Paubrasilia echinata (Pau Brasil) protein is Proteinase inhibitor CeKI.